A 153-amino-acid polypeptide reads, in one-letter code: uncharacterized protein (153 aa).

This is an uncharacterized protein from Alkalihalophilus pseudofirmus (strain ATCC BAA-2126 / JCM 17055 / OF4) (Bacillus pseudofirmus).